A 63-amino-acid chain; its full sequence is Large ribosomal subunit protein bL32c (63 aa).

A disordered region spans residues 39–63 (SFSSGNEHPKPKGFSGQQTNNKIFE). Residues 53–63 (SGQQTNNKIFE) show a composition bias toward polar residues.

The protein belongs to the bacterial ribosomal protein bL32 family.

The protein resides in the plastid. It localises to the chloroplast. The chain is Large ribosomal subunit protein bL32c from Triticum aestivum (Wheat).